The sequence spans 279 residues: Thymidylate synthase (279 aa).

A dUMP-binding site is contributed by 141 to 142; the sequence is RR. Cysteine 161 functions as the Nucleophile in the catalytic mechanism. DUMP is bound by residues 181 to 184, asparagine 192, and 222 to 224; these read RSND and HIY. Aspartate 184 is a (6R)-5,10-methylene-5,6,7,8-tetrahydrofolate binding site. Alanine 278 serves as a coordination point for (6R)-5,10-methylene-5,6,7,8-tetrahydrofolate.

It belongs to the thymidylate synthase family. Bacterial-type ThyA subfamily. As to quaternary structure, homodimer.

It localises to the cytoplasm. The catalysed reaction is dUMP + (6R)-5,10-methylene-5,6,7,8-tetrahydrofolate = 7,8-dihydrofolate + dTMP. The protein operates within pyrimidine metabolism; dTTP biosynthesis. Its function is as follows. Catalyzes the reductive methylation of 2'-deoxyuridine-5'-monophosphate (dUMP) to 2'-deoxythymidine-5'-monophosphate (dTMP) while utilizing 5,10-methylenetetrahydrofolate (mTHF) as the methyl donor and reductant in the reaction, yielding dihydrofolate (DHF) as a by-product. This enzymatic reaction provides an intracellular de novo source of dTMP, an essential precursor for DNA biosynthesis. The chain is Thymidylate synthase from Bacillus licheniformis (strain ATCC 14580 / DSM 13 / JCM 2505 / CCUG 7422 / NBRC 12200 / NCIMB 9375 / NCTC 10341 / NRRL NRS-1264 / Gibson 46).